The chain runs to 734 residues: Polyribonucleotide nucleotidyltransferase (734 aa).

Asp497 and Asp503 together coordinate Mg(2+). Residues 564–623 (PRIIHITIDPDKIRDVIGPGGKVIKKIVEETGAEIDIEDDGRVFIAAVDQEKGRKAQEII) enclose the KH domain. In terms of domain architecture, S1 motif spans 633–707 (GEIYTGRVTR…SQGRLKLSKK (75 aa)). A disordered region spans residues 700–734 (GRLKLSKKEATPPPESTAMKEGRAHRPSRRRESAR). Over residues 717 to 734 (AMKEGRAHRPSRRRESAR) the composition is skewed to basic and acidic residues.

This sequence belongs to the polyribonucleotide nucleotidyltransferase family. The cofactor is Mg(2+).

Its subcellular location is the cytoplasm. The catalysed reaction is RNA(n+1) + phosphate = RNA(n) + a ribonucleoside 5'-diphosphate. In terms of biological role, involved in mRNA degradation. Catalyzes the phosphorolysis of single-stranded polyribonucleotides processively in the 3'- to 5'-direction. The polypeptide is Polyribonucleotide nucleotidyltransferase (Pelotomaculum thermopropionicum (strain DSM 13744 / JCM 10971 / SI)).